The sequence spans 199 residues: Fe/S biogenesis protein NfuA (199 aa).

The [4Fe-4S] cluster site is built by Cys151 and Cys154.

The protein belongs to the NfuA family. In terms of assembly, homodimer. The cofactor is [4Fe-4S] cluster.

Functionally, involved in iron-sulfur cluster biogenesis. Binds a 4Fe-4S cluster, can transfer this cluster to apoproteins, and thereby intervenes in the maturation of Fe/S proteins. Could also act as a scaffold/chaperone for damaged Fe/S proteins. The sequence is that of Fe/S biogenesis protein NfuA from Xanthomonas oryzae pv. oryzae (strain MAFF 311018).